The chain runs to 337 residues: DNA replication regulator sld2 (337 aa).

Thr60 and Thr74 each carry phosphothreonine; by cdc2. The disordered stretch occupies residues 71–97 (KFQTPTKQRAETEANESPKAPRNDYLQ). The residue at position 87 (Ser87) is a Phosphoserine; by cdc2. 2 positions are modified to phosphothreonine; by cdc2: Thr99 and Thr154. Phosphoserine is present on Ser183. The tract at residues 258-302 (SMNLSKSHLEGLPEIDEDAENGIDDNEDTTASKDSSPFLDLQSER) is disordered. Residues 270-285 (PEIDEDAENGIDDNED) are compositionally biased toward acidic residues.

The protein belongs to the SLD2 family. In terms of assembly, interacts with rad4. Phosphorylated by cdc2 at the onset of S-phase.

The protein resides in the cytoplasm. It localises to the nucleus. Its function is as follows. Has a role in the initiation of DNA replication. Required at S-phase checkpoint. This Schizosaccharomyces pombe (strain 972 / ATCC 24843) (Fission yeast) protein is DNA replication regulator sld2 (drc1).